Reading from the N-terminus, the 164-residue chain is Succinate dehydrogenase assembly factor 2, mitochondrial (164 aa).

This sequence belongs to the SDHAF2 family. As to quaternary structure, interacts with the flavoprotein subunit within the SDH catalytic dimer.

The protein localises to the mitochondrion matrix. In terms of biological role, plays an essential role in the assembly of succinate dehydrogenase (SDH), an enzyme complex (also referred to as respiratory complex II) that is a component of both the tricarboxylic acid (TCA) cycle and the mitochondrial electron transport chain, and which couples the oxidation of succinate to fumarate with the reduction of ubiquinone (coenzyme Q) to ubiquinol. Required for flavinylation (covalent attachment of FAD) of the flavoprotein subunit of the SDH catalytic dimer. The chain is Succinate dehydrogenase assembly factor 2, mitochondrial from Lodderomyces elongisporus (strain ATCC 11503 / CBS 2605 / JCM 1781 / NBRC 1676 / NRRL YB-4239) (Yeast).